The sequence spans 222 residues: Octanoyltransferase (222 aa).

Residues 34–214 (GEAPSTVLLL…EFRKHEEALV (181 aa)) enclose the BPL/LPL catalytic domain. Residues 72 to 79 (RGGKLTWH), 144 to 146 (AIG), and 157 to 159 (GVA) contribute to the substrate site. The Acyl-thioester intermediate role is filled by Cys-175.

It belongs to the LipB family.

It localises to the cytoplasm. The catalysed reaction is octanoyl-[ACP] + L-lysyl-[protein] = N(6)-octanoyl-L-lysyl-[protein] + holo-[ACP] + H(+). It participates in protein modification; protein lipoylation via endogenous pathway; protein N(6)-(lipoyl)lysine from octanoyl-[acyl-carrier-protein]: step 1/2. Its function is as follows. Catalyzes the transfer of endogenously produced octanoic acid from octanoyl-acyl-carrier-protein onto the lipoyl domains of lipoate-dependent enzymes. Lipoyl-ACP can also act as a substrate although octanoyl-ACP is likely to be the physiological substrate. In Pseudarthrobacter chlorophenolicus (strain ATCC 700700 / DSM 12829 / CIP 107037 / JCM 12360 / KCTC 9906 / NCIMB 13794 / A6) (Arthrobacter chlorophenolicus), this protein is Octanoyltransferase.